Reading from the N-terminus, the 318-residue chain is Cobalamin biosynthesis protein CobD (318 aa).

5 helical membrane-spanning segments follow: residues 56–76, 78–98, 153–173, 204–224, and 298–318; these read VLWL…LWLM, EINP…LLAG, VDGV…LAMA, LANW…AWLI, and MMAS…LVGI.

Belongs to the CobD/CbiB family.

The protein resides in the cell membrane. It participates in cofactor biosynthesis; adenosylcobalamin biosynthesis. Its function is as follows. Converts cobyric acid to cobinamide by the addition of aminopropanol on the F carboxylic group. This Yersinia enterocolitica serotype O:8 / biotype 1B (strain NCTC 13174 / 8081) protein is Cobalamin biosynthesis protein CobD.